The chain runs to 4655 residues: Low-density lipoprotein receptor-related protein 2 (4655 aa).

The N-terminal stretch at methionine 1–glycine 25 is a signal peptide. At glutamine 26–threonine 4423 the chain is on the extracellular side. LDL-receptor class A domains lie at glutamate 27–alanine 63, threonine 66–serine 104, threonine 107–glutamine 143, threonine 146–threonine 180, isoleucine 182–asparagine 218, threonine 221–glutamate 257, and lysine 265–serine 308. Disulfide bonds link cysteine 28–cysteine 40, cysteine 35–cysteine 53, cysteine 47–cysteine 62, cysteine 67–cysteine 80, cysteine 74–cysteine 93, cysteine 87–cysteine 103, cysteine 108–cysteine 120, cysteine 115–cysteine 133, cysteine 127–cysteine 142, cysteine 147–cysteine 157, cysteine 152–cysteine 170, cysteine 164–cysteine 179, cysteine 183–cysteine 195, cysteine 190–cysteine 208, cysteine 202–cysteine 217, cysteine 222–cysteine 234, cysteine 229–cysteine 247, cysteine 241–cysteine 256, cysteine 266–cysteine 279, cysteine 273–cysteine 292, and cysteine 286–cysteine 307. N-linked (GlcNAc...) asparagine glycosylation is found at asparagine 159 and asparagine 178. N-linked (GlcNAc...) asparagine glycosylation is found at asparagine 299, asparagine 300, asparagine 341, asparagine 388, and asparagine 463. LDL-receptor class B repeat units follow at residues glutamine 436–asparagine 478, asparagine 479–valine 521, glycine 522–serine 568, lysine 569–glutamine 613, serine 753–serine 795, lysine 796–alanine 837, glycine 838–alanine 881, and serine 882–histidine 925. The N-linked (GlcNAc...) asparagine glycan is linked to asparagine 866. The LDL-receptor class A 8 domain maps to glutamine 1025–glycine 1061. 3 cysteine pairs are disulfide-bonded: cysteine 1026/cysteine 1038, cysteine 1033/cysteine 1051, and cysteine 1045/cysteine 1060. Asparagine 1064 carries an N-linked (GlcNAc...) asparagine glycan. 7 consecutive LDL-receptor class A domains span residues threonine 1066–proline 1102, serine 1108–asparagine 1144, threonine 1148–valine 1184, asparagine 1186–proline 1223, methionine 1229–valine 1267, threonine 1270–proline 1306, and aspartate 1304–asparagine 1349. Intrachain disulfides connect cysteine 1067/cysteine 1079, cysteine 1074/cysteine 1092, cysteine 1086/cysteine 1101, cysteine 1109/cysteine 1121, cysteine 1116/cysteine 1134, and cysteine 1128/cysteine 1143. Residues tryptophan 1126, aspartate 1129, aspartate 1131, aspartate 1133, aspartate 1139, and glutamate 1140 each contribute to the Ca(2+) site. An N-linked (GlcNAc...) asparagine glycan is attached at asparagine 1144. Intrachain disulfides connect cysteine 1149–cysteine 1161, cysteine 1156–cysteine 1174, and cysteine 1168–cysteine 1183. N-linked (GlcNAc...) asparagine glycosylation is present at asparagine 1186. 12 disulfides stabilise this stretch: cysteine 1187/cysteine 1200, cysteine 1194/cysteine 1213, cysteine 1207/cysteine 1222, cysteine 1230/cysteine 1243, cysteine 1237/cysteine 1256, cysteine 1250/cysteine 1266, cysteine 1271/cysteine 1283, cysteine 1278/cysteine 1296, cysteine 1290/cysteine 1305, cysteine 1305/cysteine 1325, cysteine 1312/cysteine 1338, and cysteine 1332/cysteine 1348. 5 residues coordinate Ca(2+): aspartate 1208, valine 1210, aspartate 1212, aspartate 1218, and glutamate 1219. N-linked (GlcNAc...) asparagine glycosylation is found at asparagine 1327, asparagine 1340, and asparagine 1383. The region spanning aspartate 1390 to lysine 1429 is the EGF-like 1; calcium-binding domain. 3 cysteine pairs are disulfide-bonded: cysteine 1394/cysteine 1404, cysteine 1400/cysteine 1413, and cysteine 1415/cysteine 1428. N-linked (GlcNAc...) asparagine glycans are attached at residues asparagine 1464, asparagine 1496, and asparagine 1550. 5 LDL-receptor class B repeats span residues glycine 1478–glycine 1520, arginine 1521–methionine 1563, histidine 1566–asparagine 1609, arginine 1610–serine 1654, and valine 1655–serine 1695. N-linked (GlcNAc...) asparagine glycosylation occurs at asparagine 1675. An EGF-like 2 domain is found at serine 1700–leucine 1741. 3 disulfide bridges follow: cysteine 1704–cysteine 1713, cysteine 1709–cysteine 1725, and cysteine 1727–cysteine 1740. LDL-receptor class B repeat units lie at residues glutamine 1790–serine 1832, arginine 1833–arginine 1882, glycine 1883–glutamate 1930, glutamine 1931–phenylalanine 1972, and leucine 1973–arginine 2013. The N-linked (GlcNAc...) asparagine glycan is linked to asparagine 1810. Residue asparagine 2055 is glycosylated (N-linked (GlcNAc...) asparagine). LDL-receptor class B repeat units follow at residues glycine 2107–alanine 2156, glycine 2157–asparagine 2201, arginine 2202–aspartate 2245, glycine 2246–serine 2289, aspartate 2431–threonine 2477, arginine 2478–glutamine 2518, glycine 2519–glutamate 2562, aspartate 2563–tyrosine 2604, and isoleucine 2605–asparagine 2646. N-linked (GlcNAc...) asparagine glycans are attached at residues asparagine 2177 and asparagine 2224. Residues asparagine 2499 and asparagine 2547 are each glycosylated (N-linked (GlcNAc...) asparagine). LDL-receptor class A domains lie at arginine 2699 to alanine 2737, threonine 2740 to leucine 2776, aspartate 2779 to proline 2818, threonine 2821 to threonine 2860, threonine 2863 to glycine 2900, threonine 2905 to glutamine 2944, asparagine 2947 to threonine 2989, threonine 2992 to leucine 3028, threonine 3031 to histidine 3069, and threonine 3074 to glycine 3110. 18 disulfides stabilise this stretch: cysteine 2700–cysteine 2712, cysteine 2707–cysteine 2725, cysteine 2719–cysteine 2736, cysteine 2741–cysteine 2753, cysteine 2748–cysteine 2766, cysteine 2760–cysteine 2775, cysteine 2780–cysteine 2793, cysteine 2788–cysteine 2806, cysteine 2800–cysteine 2817, cysteine 2822–cysteine 2835, cysteine 2829–cysteine 2848, cysteine 2842–cysteine 2859, cysteine 2864–cysteine 2876, cysteine 2871–cysteine 2889, cysteine 2883–cysteine 2899, cysteine 2906–cysteine 2918, cysteine 2913–cysteine 2931, and cysteine 2925–cysteine 2943. N-linked (GlcNAc...) asparagine glycosylation is present at asparagine 2781. N-linked (GlcNAc...) asparagine glycosylation is found at asparagine 2809 and asparagine 2810. A glycan (N-linked (GlcNAc...) asparagine) is linked at asparagine 2947. 18 disulfide bridges follow: cysteine 2948-cysteine 2965, cysteine 2955-cysteine 2978, cysteine 2972-cysteine 2988, cysteine 2993-cysteine 3005, cysteine 3000-cysteine 3018, cysteine 3012-cysteine 3027, cysteine 3032-cysteine 3044, cysteine 3039-cysteine 3057, cysteine 3051-cysteine 3068, cysteine 3075-cysteine 3087, cysteine 3082-cysteine 3100, cysteine 3094-cysteine 3109, cysteine 3114-cysteine 3126, cysteine 3122-cysteine 3135, cysteine 3137-cysteine 3150, cysteine 3156-cysteine 3167, cysteine 3163-cysteine 3176, and cysteine 3178-cysteine 3191. Asparagine 2987 carries N-linked (GlcNAc...) asparagine glycosylation. The 42-residue stretch at glycine 3110–valine 3151 folds into the EGF-like 3 domain. N-linked (GlcNAc...) asparagine glycosylation is present at asparagine 3125. The EGF-like 4; calcium-binding domain occupies aspartate 3152–arginine 3192. N-linked (GlcNAc...) asparagine glycans are attached at residues asparagine 3211, asparagine 3257, asparagine 3315, and asparagine 3355. 5 LDL-receptor class B repeats span residues lysine 3239 to serine 3281, arginine 3282 to arginine 3324, glycine 3333 to asparagine 3376, aspartate 3377 to threonine 3419, and isoleucine 3420 to tyrosine 3460. A glycan (N-linked (GlcNAc...) asparagine) is linked at asparagine 3446. LDL-receptor class A domains lie at methionine 3511–proline 3549, phenylalanine 3552–glutamate 3590, histidine 3593–alanine 3631, threonine 3634–methionine 3672, leucine 3677–glutamate 3715, threonine 3718–alanine 3755, glutamate 3758–glutamate 3794, threonine 3797–proline 3833, tyrosine 3841–leucine 3879, proline 3882–arginine 3921, and proline 3927–asparagine 3963. Disulfide bonds link cysteine 3512/cysteine 3525, cysteine 3519/cysteine 3538, cysteine 3532/cysteine 3548, cysteine 3553/cysteine 3565, cysteine 3560/cysteine 3578, cysteine 3572/cysteine 3589, cysteine 3594/cysteine 3606, cysteine 3601/cysteine 3619, cysteine 3613/cysteine 3630, cysteine 3635/cysteine 3647, cysteine 3642/cysteine 3660, cysteine 3654/cysteine 3671, cysteine 3678/cysteine 3692, cysteine 3686/cysteine 3705, cysteine 3699/cysteine 3714, cysteine 3719/cysteine 3732, cysteine 3727/cysteine 3745, cysteine 3739/cysteine 3754, cysteine 3759/cysteine 3771, cysteine 3766/cysteine 3784, cysteine 3778/cysteine 3793, cysteine 3798/cysteine 3810, cysteine 3805/cysteine 3823, cysteine 3817/cysteine 3832, cysteine 3842/cysteine 3854, cysteine 3849/cysteine 3867, cysteine 3861/cysteine 3878, cysteine 3883/cysteine 3896, cysteine 3891/cysteine 3909, cysteine 3903/cysteine 3920, cysteine 3928/cysteine 3940, cysteine 3935/cysteine 3953, and cysteine 3947/cysteine 3962. Residue asparagine 3564 is glycosylated (N-linked (GlcNAc...) asparagine). A glycan (N-linked (GlcNAc...) asparagine) is linked at asparagine 3680. A glycan (N-linked (GlcNAc...) asparagine) is linked at asparagine 3978. The region spanning aspartate 4007–alanine 4048 is the EGF-like 5; calcium-binding domain. Disulfide bonds link cysteine 4011/cysteine 4021, cysteine 4017/cysteine 4030, and cysteine 4032/cysteine 4047. Residue asparagine 4068 is glycosylated (N-linked (GlcNAc...) asparagine). LDL-receptor class B repeat units follow at residues arginine 4154–leucine 4196, glycine 4197–asparagine 4240, and aspartate 4242–glutamine 4283. N-linked (GlcNAc...) asparagine glycosylation is present at asparagine 4327. In terms of domain architecture, EGF-like 6 spans leucine 4377 to glutamate 4411. 3 disulfide bridges follow: cysteine 4381/cysteine 4389, cysteine 4383/cysteine 4399, and cysteine 4401/cysteine 4410. A helical transmembrane segment spans residues alanine 4424–phenylalanine 4446. At histidine 4447 to valine 4655 the chain is on the cytoplasmic side. The SH3-binding motif lies at serine 4453–proline 4462. The PxLPxI/L motif 1; mediates interaction with ANKRA2 signature appears at proline 4456 to leucine 4461. Residues proline 4459–leucine 4464 carry the PxLPxI/L motif 2; mediates interaction with ANKRA2 motif. Serine 4463 and serine 4466 each carry phosphoserine. Positions phenylalanine 4521–tyrosine 4526 match the Endocytosis signal motif. The disordered stretch occupies residues lysine 4550–glycine 4574. A compositionally biased stretch (polar residues) spans threonine 4565 to glycine 4574. At serine 4569 the chain carries Phosphoserine. The interaction with DAB2 stretch occupies residues glutamine 4589 to glutamate 4602. The short motif at asparagine 4595–tyrosine 4598 is the NPXY motif element. The SH2-binding motif lies at tyrosine 4598–methionine 4601. The interval methionine 4601–valine 4655 is disordered. The short motif at alanine 4611–lysine 4622 is the SH3-binding element. Pro residues predominate over residues threonine 4612–lysine 4624. Residue serine 4616 is modified to Phosphoserine. Threonine 4632 carries the post-translational modification Phosphothreonine. Position 4653 is a phosphoserine (serine 4653).

It belongs to the LDLR family. Binds plasminogen, extracellular matrix components, plasminogen activator-plasminogen activator inhibitor type I complex, apolipoprotein E-enriched beta-VLDL, lipoprotein lipase, lactoferrin, CLU/clusterin and calcium. Forms a multimeric complex together with LRPAP1. Interacts (via PxLPxI/L motif) with ANKRA2 (via ankyrin repeats). Interacts with LRP2BP. Interacts (via NPXY motif) with DAB2; the interaction is not affected by tyrosine phosphorylation of the NPXY motif. Interacts with MB. Interacts with BMP4. Interacts with the Sonic hedgehog protein N-product which is the active product of SHH. Interacts with CST3 in a calcium-dependent manner. Interacts with the vitamin-D binding protein GC/DBP. Interacts with sex hormone-binding protein SHBG. Interacts with angiotensin-2. Also interacts with angiotensin 1-7. Interacts with APOM. Interacts with selenoprotein SEPP1. Interacts with LEP. Interacts with ALB. Interacts with the antiapoptotic protein BIRC5/survivin. Interacts with matrix metalloproteinase MMP2 in complex with metalloproteinase inhibitor TIMP1. In neurons, forms a trimeric complex with APP and APPB1/FE65. Interacts with LDLRAP1/ARH; mediates trafficking of LRP2 to the endocytic recycling compartment. Does not interact with beta-amyloid protein 40 alone but interacts with the complex composed of beta-amyloid protein 40 and CLU/APOJ. Interacts with MDK. In terms of processing, a fraction undergoes proteolytic cleavage of the extracellular domain at the cell membrane to generate a cytoplasmic tail fragment. This is internalized into the early endosome from where it trafficks in an LDLRAP1/ARH-dependent manner to the endocytic recycling compartment (ERC). In the ERC, it is further cleaved by gamma-secretase to release a fragment which translocates to the nucleus and mediates transcriptional repression. Post-translationally, N-glycosylation is required for ligand binding. In terms of tissue distribution, expressed in first and third trimester cytotrophoblasts in the placenta (at protein level). Absorptive epithelia, including renal proximal tubules.

The protein localises to the apical cell membrane. The protein resides in the endosome lumen. Its subcellular location is the membrane. It is found in the coated pit. It localises to the cell projection. The protein localises to the dendrite. The protein resides in the axon. Multiligand endocytic receptor. Acts together with CUBN to mediate endocytosis of high-density lipoproteins. Mediates receptor-mediated uptake of polybasic drugs such as aprotinin, aminoglycosides and polymyxin B. In the kidney, mediates the tubular uptake and clearance of leptin. Also mediates transport of leptin across the blood-brain barrier through endocytosis at the choroid plexus epithelium. Endocytosis of leptin in neuronal cells is required for hypothalamic leptin signaling and leptin-mediated regulation of feeding and body weight. Mediates endocytosis and subsequent lysosomal degradation of CST3 in kidney proximal tubule cells. Mediates renal uptake of 25-hydroxyvitamin D3 in complex with the vitamin D3 transporter GC/DBP. Mediates renal uptake of metallothionein-bound heavy metals. Together with CUBN, mediates renal reabsorption of myoglobin. Mediates renal uptake and subsequent lysosomal degradation of APOM. Plays a role in kidney selenium homeostasis by mediating renal endocytosis of selenoprotein SEPP1. Mediates renal uptake of the antiapoptotic protein BIRC5/survivin which may be important for functional integrity of the kidney. Mediates renal uptake of matrix metalloproteinase MMP2 in complex with metalloproteinase inhibitor TIMP1. Mediates endocytosis of Sonic hedgehog protein N-product (ShhN), the active product of SHH. Also mediates ShhN transcytosis. In the embryonic neuroepithelium, mediates endocytic uptake and degradation of BMP4, is required for correct SHH localization in the ventral neural tube and plays a role in patterning of the ventral telencephalon. Required at the onset of neurulation to sequester SHH on the apical surface of neuroepithelial cells of the rostral diencephalon ventral midline and to control PTCH1-dependent uptake and intracellular trafficking of SHH. During neurulation, required in neuroepithelial cells for uptake of folate bound to the folate receptor FOLR1 which is necessary for neural tube closure. In the adult brain, negatively regulates BMP signaling in the subependymal zone which enables neurogenesis to proceed. In astrocytes, mediates endocytosis of ALB which is required for the synthesis of the neurotrophic factor oleic acid. Involved in neurite branching. During optic nerve development, required for SHH-mediated migration and proliferation of oligodendrocyte precursor cells. Mediates endocytic uptake and clearance of SHH in the retinal margin which protects retinal progenitor cells from mitogenic stimuli and keeps them quiescent. Plays a role in reproductive organ development by mediating uptake in reproductive tissues of androgen and estrogen bound to the sex hormone binding protein SHBG. Mediates endocytosis of angiotensin-2. Also mediates endocytosis of angiotensis 1-7. Binds to the complex composed of beta-amyloid protein 40 and CLU/APOJ and mediates its endocytosis and lysosomal degradation. Required for embryonic heart development. Required for normal hearing, possibly through interaction with estrogen in the inner ear. The polypeptide is Low-density lipoprotein receptor-related protein 2 (Homo sapiens (Human)).